Reading from the N-terminus, the 248-residue chain is DNA repair protein RecO (248 aa).

The protein belongs to the RecO family.

Involved in DNA repair and RecF pathway recombination. The protein is DNA repair protein RecO of Streptomyces avermitilis (strain ATCC 31267 / DSM 46492 / JCM 5070 / NBRC 14893 / NCIMB 12804 / NRRL 8165 / MA-4680).